Reading from the N-terminus, the 288-residue chain is Aquaporin PIP 1-3 (288 aa).

The tract at residues 1–30 (MEGKEEDVRLGANRYTERQPIGTAAQGAEE) is disordered. Transmembrane regions (helical) follow at residues 57 to 77 (IAEF…VMGV) and 92 to 114 (IAWS…SGGH). The short motif at 116–118 (NPA) is the NPA 1 element. The next 3 membrane-spanning stretches (helical) occupy residues 135–155 (VFYM…VKGF), 177–197 (GDGL…VFSA), and 211–231 (ILAP…TIPI). An NPA 2 motif is present at residues 237 to 239 (NPA). A helical membrane pass occupies residues 259-279 (IFWVGPFIGAALAAIYHVVVI).

The protein belongs to the MIP/aquaporin (TC 1.A.8) family. PIP (TC 1.A.8.11) subfamily. Expressed in roots and leaves.

It localises to the cell membrane. Its function is as follows. Water channel required to facilitate the transport of water across cell membrane. Increases the capacity for root water uptake under water deficit. May play a role in drought avoidance in upland rice. The polypeptide is Aquaporin PIP 1-3 (PIP1-3) (Oryza sativa subsp. japonica (Rice)).